A 301-amino-acid chain; its full sequence is UDP-N-acetylenolpyruvoylglucosamine reductase (301 aa).

The FAD-binding PCMH-type domain maps to 29–195; that stretch reads KIGGPADVFV…VEAIFSLTRG (167 aa). Arg174 is an active-site residue. The Proton donor role is filled by Ser224. Glu294 is a catalytic residue.

This sequence belongs to the MurB family. It depends on FAD as a cofactor.

The protein resides in the cytoplasm. It carries out the reaction UDP-N-acetyl-alpha-D-muramate + NADP(+) = UDP-N-acetyl-3-O-(1-carboxyvinyl)-alpha-D-glucosamine + NADPH + H(+). It participates in cell wall biogenesis; peptidoglycan biosynthesis. In terms of biological role, cell wall formation. The sequence is that of UDP-N-acetylenolpyruvoylglucosamine reductase from Halalkalibacterium halodurans (strain ATCC BAA-125 / DSM 18197 / FERM 7344 / JCM 9153 / C-125) (Bacillus halodurans).